Reading from the N-terminus, the 132-residue chain is Peptide methionine sulfoxide reductase MsrB (132 aa).

One can recognise a MsrB domain in the interval leucine 8–arginine 130. Cysteine 47, cysteine 50, cysteine 96, and cysteine 99 together coordinate Zn(2+). Cysteine 119 (nucleophile) is an active-site residue.

The protein belongs to the MsrB Met sulfoxide reductase family. Requires Zn(2+) as cofactor.

It catalyses the reaction L-methionyl-[protein] + [thioredoxin]-disulfide + H2O = L-methionyl-(R)-S-oxide-[protein] + [thioredoxin]-dithiol. This chain is Peptide methionine sulfoxide reductase MsrB, found in Pseudomonas paraeruginosa (strain DSM 24068 / PA7) (Pseudomonas aeruginosa (strain PA7)).